The sequence spans 90 residues: MNKNELVAAVADKAGLSKADASSAVDAVFETIQGELKNGGDIRLVGFGNFSVSRREASKGRNPSTGAEVDIPARNVPKFTAGKGLKDAVN.

Belongs to the bacterial histone-like protein family.

In terms of biological role, histone-like DNA-binding protein which is capable of wrapping DNA to stabilize it, and thus to prevent its denaturation under extreme environmental conditions. This is DNA-binding protein HRm (hupB) from Rhizobium meliloti (strain 1021) (Ensifer meliloti).